The primary structure comprises 492 residues: Dipeptide and tripeptide permease A (492 aa).

Over 1–20 (MSTANKHPEAASLNAFKQPR) the chain is Cytoplasmic. A helical membrane pass occupies residues 21–43 (SFYLIFSIELWERFGYYGLQGIM). Topologically, residues 44–58 (AVYLVKMLGMSEAQS) are periplasmic. A helical membrane pass occupies residues 59 to 79 (ITLFASFSALVYGLIAVGGWL). Topologically, residues 80-88 (GDKVLGTKR) are cytoplasmic. The chain crosses the membrane as a helical span at residues 89–109 (VIVLGTLVLALGYALVAWSGH). A topological domain (periplasmic) is located at residue aspartate 110. The helical transmembrane segment at 111 to 131 (IAMIYFGMATIAVGNGLFKAN) threads the bilayer. Residues 132–152 (PSSLLSTCYEKDDPRLDGAFT) are Cytoplasmic-facing. A helical transmembrane segment spans residues 153–173 (MYYMAINIGSFFSMLATPWLA). Over 174-178 (AQFGW) the chain is Periplasmic. The helical transmembrane segment at 179-199 (STAFGLSFVGMLITLVNFMFF) threads the bilayer. At 200 to 217 (RKWVKDHGSKPDFAPLNM) the chain is on the cytoplasmic side. The helical transmembrane segment at 218–238 (GKLLVTLLGIAVMIAAATWLL) threads the bilayer. Residues 239–245 (HNQDIAR) lie on the Periplasmic side of the membrane. The chain crosses the membrane as a helical span at residues 246-266 (MVLGAVAVAIVVIFTKEALTL). Topologically, residues 267–273 (KGAARRK) are cytoplasmic. The helical transmembrane segment at 274–294 (MIVAFLLMLEAIVFFVLYMQM) threads the bilayer. The Periplasmic segment spans residues 295 to 319 (PTSLNFFAIRNVEHSLLGIAFQPEQ). The chain crosses the membrane as a helical span at residues 320 to 340 (FQALNPFWIMIFSPLLAALYN). Residues 341 to 351 (KLGDRMPMPHK) lie on the Cytoplasmic side of the membrane. Residues 352-372 (FALGMVLCSAAFLVLPLGASL) traverse the membrane as a helical segment. The Periplasmic segment spans residues 373–377 (ANKMG). A helical membrane pass occupies residues 378 to 398 (IVSVGWLVLSYALQSVGELMI). Residues 399–413 (SGLGLAMVAQLVPQR) lie on the Cytoplasmic side of the membrane. The helical transmembrane segment at 414-434 (LMGFIMGSWFLTTAGAAMVAG) threads the bilayer. Over 435–458 (KVANLMAVPENITNPLLSLHVYGD) the chain is Periplasmic. A helical transmembrane segment spans residues 459-479 (IFFKIGITTGVIAVLMILAAP). The Cytoplasmic segment spans residues 480 to 492 (LLNRMTQDEQPGV).

The protein belongs to the major facilitator superfamily. Proton-dependent oligopeptide transporter (POT/PTR) (TC 2.A.17) family. DtpA subfamily.

It is found in the cell inner membrane. Proton-dependent permease that transports di- and tripeptides. The chain is Dipeptide and tripeptide permease A from Erwinia pyrifoliae (strain DSM 12163 / CIP 106111 / Ep16/96).